A 238-amino-acid polypeptide reads, in one-letter code: Ribosomal RNA small subunit methyltransferase G (238 aa).

S-adenosyl-L-methionine is bound by residues Gly-99, Leu-104, 122-124 (DAT), 150-151 (VE), and Arg-164.

The protein belongs to the methyltransferase superfamily. RNA methyltransferase RsmG family.

The protein resides in the cytoplasm. Specifically methylates the N7 position of a guanine in 16S rRNA. In Chlorobium luteolum (strain DSM 273 / BCRC 81028 / 2530) (Pelodictyon luteolum), this protein is Ribosomal RNA small subunit methyltransferase G.